The chain runs to 85 residues: Cell division topological specificity factor (85 aa).

It belongs to the MinE family.

Prevents the cell division inhibition by proteins MinC and MinD at internal division sites while permitting inhibition at polar sites. This ensures cell division at the proper site by restricting the formation of a division septum at the midpoint of the long axis of the cell. This is Cell division topological specificity factor from Chromobacterium violaceum (strain ATCC 12472 / DSM 30191 / JCM 1249 / CCUG 213 / NBRC 12614 / NCIMB 9131 / NCTC 9757 / MK).